A 549-amino-acid chain; its full sequence is Cation/acetate symporter ActP (549 aa).

Transmembrane regions (helical) follow at residues 33 to 53 (WQAI…TYWA), 77 to 97 (LAIA…ALVF), 103 to 123 (GLIY…LIAE), 148 to 168 (ILSA…QMVG), 183 to 203 (IAVV…GMLA), 206 to 226 (WVQI…AFMV), 262 to 282 (ISAL…PHIL), 303 to 323 (GFMG…IMLV), 355 to 375 (LFLG…VAGL), 404 to 424 (VSKI…VLFE), 428 to 448 (IAFM…PIIL), 464 to 484 (GGWL…TIWV), and 493 to 513 (IFPY…GIWF).

It belongs to the sodium:solute symporter (SSF) (TC 2.A.21) family.

Its subcellular location is the cell inner membrane. In terms of biological role, transports acetate. The sequence is that of Cation/acetate symporter ActP from Escherichia coli O6:K15:H31 (strain 536 / UPEC).